The primary structure comprises 331 residues: 4-hydroxy-3-methylbut-2-enyl diphosphate reductase (331 aa).

C12 serves as a coordination point for [4Fe-4S] cluster. Residues H43 and H81 each coordinate (2E)-4-hydroxy-3-methylbut-2-enyl diphosphate. Residues H43 and H81 each coordinate dimethylallyl diphosphate. 2 residues coordinate isopentenyl diphosphate: H43 and H81. C103 contacts [4Fe-4S] cluster. H131 contacts (2E)-4-hydroxy-3-methylbut-2-enyl diphosphate. Position 131 (H131) interacts with dimethylallyl diphosphate. Position 131 (H131) interacts with isopentenyl diphosphate. The active-site Proton donor is the E133. Residue T170 participates in (2E)-4-hydroxy-3-methylbut-2-enyl diphosphate binding. C198 is a [4Fe-4S] cluster binding site. (2E)-4-hydroxy-3-methylbut-2-enyl diphosphate contacts are provided by S226, N228, and S271. Dimethylallyl diphosphate-binding residues include S226, N228, and S271. S226, N228, and S271 together coordinate isopentenyl diphosphate.

The protein belongs to the IspH family. Requires [4Fe-4S] cluster as cofactor.

The catalysed reaction is isopentenyl diphosphate + 2 oxidized [2Fe-2S]-[ferredoxin] + H2O = (2E)-4-hydroxy-3-methylbut-2-enyl diphosphate + 2 reduced [2Fe-2S]-[ferredoxin] + 2 H(+). It carries out the reaction dimethylallyl diphosphate + 2 oxidized [2Fe-2S]-[ferredoxin] + H2O = (2E)-4-hydroxy-3-methylbut-2-enyl diphosphate + 2 reduced [2Fe-2S]-[ferredoxin] + 2 H(+). It functions in the pathway isoprenoid biosynthesis; dimethylallyl diphosphate biosynthesis; dimethylallyl diphosphate from (2E)-4-hydroxy-3-methylbutenyl diphosphate: step 1/1. The protein operates within isoprenoid biosynthesis; isopentenyl diphosphate biosynthesis via DXP pathway; isopentenyl diphosphate from 1-deoxy-D-xylulose 5-phosphate: step 6/6. In terms of biological role, catalyzes the conversion of 1-hydroxy-2-methyl-2-(E)-butenyl 4-diphosphate (HMBPP) into a mixture of isopentenyl diphosphate (IPP) and dimethylallyl diphosphate (DMAPP). Acts in the terminal step of the DOXP/MEP pathway for isoprenoid precursor biosynthesis. In Listeria monocytogenes serovar 1/2a (strain ATCC BAA-679 / EGD-e), this protein is 4-hydroxy-3-methylbut-2-enyl diphosphate reductase.